A 244-amino-acid chain; its full sequence is 14-3-3 protein beta/alpha-1 (244 aa).

An N-acetylmethionine modification is found at methionine 1.

This sequence belongs to the 14-3-3 family. As to quaternary structure, homodimer, and heterodimer with other family members. In terms of tissue distribution, expressed in brain, gill, heart, intestine, kidney, liver, ovary, skin, spleen and testis.

It localises to the cytoplasm. Its function is as follows. Adapter protein implicated in the regulation of a large spectrum of both general and specialized signaling pathways. Binds to a large number of partners, usually by recognition of a phosphoserine or phosphothreonine motif. Binding generally results in the modulation of the activity of the binding partner. The chain is 14-3-3 protein beta/alpha-1 from Oncorhynchus mykiss (Rainbow trout).